Here is a 335-residue protein sequence, read N- to C-terminus: DNA polymerase beta (335 aa).

A Glycyl lysine isopeptide (Lys-Gly) (interchain with G-Cter in ubiquitin) cross-link involves residue lysine 41. K(+) is bound at residue lysine 60. Lysine 60 is a Na(+) binding site. Residue lysine 61 forms a Glycyl lysine isopeptide (Lys-Gly) (interchain with G-Cter in ubiquitin) linkage. Residues leucine 62 and valine 65 each contribute to the K(+) site. The Na(+) site is built by leucine 62 and valine 65. Lysine 72 (nucleophile; Schiff-base intermediate with DNA; for 5'-dRP lyase activity) is an active-site residue. Lysine 72 bears the N6-acetyllysine mark. Lysine 81 is covalently cross-linked (Glycyl lysine isopeptide (Lys-Gly) (interchain with G-Cter in ubiquitin)). Position 83 is an omega-N-methylarginine; by PRMT6 (arginine 83). Threonine 101, valine 103, and isoleucine 106 together coordinate K(+). 3 residues coordinate Na(+): threonine 101, valine 103, and isoleucine 106. An a 2'-deoxyribonucleoside 5'-triphosphate-binding site is contributed by arginine 149. Arginine 152 carries the post-translational modification Omega-N-methylarginine; by PRMT6. Serine 180, arginine 183, glycine 189, and aspartate 190 together coordinate a 2'-deoxyribonucleoside 5'-triphosphate. Positions 183–192 (RGAESSGDMD) are DNA-binding. Positions 190, 192, and 256 each coordinate Mg(2+).

The protein belongs to the DNA polymerase type-X family. Monomer. Binds single-stranded DNA (ssDNA). Interacts with APEX1, LIG1, LIG3, FEN1, PCNA and XRCC1. Interacts with HUWE1/ARF-BP1, STUB1/CHIP and USP47. Interacts with FAM168A. It depends on Mg(2+) as a cofactor. Post-translationally, methylation by PRMT6 stimulates the polymerase activity by enhancing DNA binding and processivity. Ubiquitinated at Lys-41, Lys-61 and Lys-81: monoubiquitinated by HUWE1/ARF-BP1. Monoubiquitinated protein is then the target of STUB1/CHIP, which catalyzes polyubiquitination from monoubiquitin, leading to degradation by the proteasome. USP47 mediates the deubiquitination of monoubiquitinated protein, preventing polyubiquitination by STUB1/CHIP and its subsequent degradation.

The protein resides in the nucleus. It localises to the cytoplasm. The catalysed reaction is DNA(n) + a 2'-deoxyribonucleoside 5'-triphosphate = DNA(n+1) + diphosphate. It carries out the reaction a 5'-end 2'-deoxyribose-2'-deoxyribonucleotide-DNA = (2E,4S)-4-hydroxypenten-2-al-5-phosphate + a 5'-end 5'-phospho-2'-deoxyribonucleoside-DNA + H(+). It catalyses the reaction 2'-deoxyribonucleotide-(2'-deoxyribose 5'-phosphate)-2'-deoxyribonucleotide-DNA = a 3'-end 2'-deoxyribonucleotide-(2,3-dehydro-2,3-deoxyribose 5'-phosphate)-DNA + a 5'-end 5'-phospho-2'-deoxyribonucleoside-DNA + H(+). Functionally, repair polymerase that plays a key role in base-excision repair. During this process, the damaged base is excised by specific DNA glycosylases, the DNA backbone is nicked at the abasic site by an apurinic/apyrimidic (AP) endonuclease, and POLB removes 5'-deoxyribose-phosphate from the preincised AP site acting as a 5'-deoxyribose-phosphate lyase (5'-dRP lyase); through its DNA polymerase activity, it adds one nucleotide to the 3' end of the arising single-nucleotide gap. Conducts 'gap-filling' DNA synthesis in a stepwise distributive fashion rather than in a processive fashion as for other DNA polymerases. It is also able to cleave sugar-phosphate bonds 3' to an intact AP site, acting as an AP lyase. This Bos taurus (Bovine) protein is DNA polymerase beta (POLB).